The sequence spans 382 residues: ATP phosphoribosyltransferase regulatory subunit (382 aa).

This sequence belongs to the class-II aminoacyl-tRNA synthetase family. HisZ subfamily. In terms of assembly, heteromultimer composed of HisG and HisZ subunits.

It localises to the cytoplasm. The protein operates within amino-acid biosynthesis; L-histidine biosynthesis; L-histidine from 5-phospho-alpha-D-ribose 1-diphosphate: step 1/9. Functionally, required for the first step of histidine biosynthesis. May allow the feedback regulation of ATP phosphoribosyltransferase activity by histidine. The sequence is that of ATP phosphoribosyltransferase regulatory subunit from Albidiferax ferrireducens (strain ATCC BAA-621 / DSM 15236 / T118) (Rhodoferax ferrireducens).